The following is a 226-amino-acid chain: Urease accessory protein UreF (226 aa).

It belongs to the UreF family. UreD, UreF and UreG form a complex that acts as a GTP-hydrolysis-dependent molecular chaperone, activating the urease apoprotein by helping to assemble the nickel containing metallocenter of UreC. The UreE protein probably delivers the nickel.

The protein resides in the cytoplasm. In terms of biological role, required for maturation of urease via the functional incorporation of the urease nickel metallocenter. This chain is Urease accessory protein UreF, found in Burkholderia cenocepacia (strain HI2424).